We begin with the raw amino-acid sequence, 223 residues long: Ubiquitin carboxyl-terminal hydrolase isozyme L1 (223 aa).

At Met-1 the chain carries N-acetylmethionine. The region spanning 2–221 (QLKPMEINPE…VRFSAVALCK (220 aa)) is the UCH catalytic domain. The interval 5 to 10 (PMEINP) is interaction with ubiquitin. Cys-90 serves as the catalytic Nucleophile. A Phosphoserine modification is found at Ser-125. His-161 acts as the Proton donor in catalysis. An interaction with ubiquitin region spans residues 211–216 (EVRFSA). Residue Cys-220 is the site of S-farnesyl cysteine attachment. Positions 221–223 (KAA) are cleaved as a propeptide — removed in mature form.

This sequence belongs to the peptidase C12 family. As to quaternary structure, monomer. Homodimer. Interacts with COPS5 and SNCA. In terms of processing, O-glycosylated. In terms of tissue distribution, expressed in the placenta at all stages of pregnancy. Expression increases as pregnancy progresses.

The protein localises to the cytoplasm. The protein resides in the endoplasmic reticulum membrane. It is found in the nucleus. It catalyses the reaction Thiol-dependent hydrolysis of ester, thioester, amide, peptide and isopeptide bonds formed by the C-terminal Gly of ubiquitin (a 76-residue protein attached to proteins as an intracellular targeting signal).. Ubiquitin-protein hydrolase involved both in the processing of ubiquitin precursors and of ubiquitinated proteins. This enzyme is a thiol protease that recognizes and hydrolyzes a peptide bond at the C-terminal glycine of ubiquitin. Also binds to free monoubiquitin and may prevent its degradation in lysosomes. The homodimer may have ATP-independent ubiquitin ligase activity. This is Ubiquitin carboxyl-terminal hydrolase isozyme L1 (UCHL1) from Macaca fascicularis (Crab-eating macaque).